Consider the following 140-residue polypeptide: Large ribosomal subunit protein uL14 (140 aa).

This sequence belongs to the universal ribosomal protein uL14 family.

This is Large ribosomal subunit protein uL14 (RpL23-A) from Aedes aegypti (Yellowfever mosquito).